Consider the following 223-residue polypeptide: ATP synthase subunit a 2 (223 aa).

Transmembrane regions (helical) follow at residues 17-37 (VAIT…ALVC), 77-97 (FLPL…SGVL), 106-126 (KIET…YFGV), 173-193 (FIIG…LMAL), and 195-215 (ILVG…FIGA).

Belongs to the ATPase A chain family. As to quaternary structure, F-type ATPases have 2 components, CF(1) - the catalytic core - and CF(0) - the membrane proton channel. CF(1) has five subunits: alpha(3), beta(3), gamma(1), delta(1), epsilon(1). CF(0) has four main subunits: a, b, b' and c.

The protein resides in the cell inner membrane. Functionally, key component of the proton channel; it plays a direct role in the translocation of protons across the membrane. The chain is ATP synthase subunit a 2 from Bradyrhizobium sp. (strain BTAi1 / ATCC BAA-1182).